Consider the following 277-residue polypeptide: 3-methyl-2-oxobutanoate hydroxymethyltransferase (277 aa).

2 residues coordinate Mg(2+): D53 and D96. 3-methyl-2-oxobutanoate-binding positions include 53–54, D96, and K126; that span reads DS. Mg(2+) is bound at residue E128. E195 serves as the catalytic Proton acceptor.

This sequence belongs to the PanB family. As to quaternary structure, homodecamer; pentamer of dimers. Mg(2+) serves as cofactor.

The protein resides in the cytoplasm. The enzyme catalyses 3-methyl-2-oxobutanoate + (6R)-5,10-methylene-5,6,7,8-tetrahydrofolate + H2O = 2-dehydropantoate + (6S)-5,6,7,8-tetrahydrofolate. The protein operates within cofactor biosynthesis; (R)-pantothenate biosynthesis; (R)-pantoate from 3-methyl-2-oxobutanoate: step 1/2. Its function is as follows. Catalyzes the reversible reaction in which hydroxymethyl group from 5,10-methylenetetrahydrofolate is transferred onto alpha-ketoisovalerate to form ketopantoate. The sequence is that of 3-methyl-2-oxobutanoate hydroxymethyltransferase from Chlorobium phaeobacteroides (strain DSM 266 / SMG 266 / 2430).